Here is a 454-residue protein sequence, read N- to C-terminus: Serine/threonine-protein phosphatase C23G10.1 (454 aa).

The Mn(2+) site is built by Asp-196, His-198, Asp-224, and Asn-256. His-257 (proton donor) is an active-site residue. His-308 and His-382 together coordinate Mn(2+).

The protein belongs to the PPP phosphatase family. PP-1 subfamily. Requires Mn(2+) as cofactor.

The enzyme catalyses O-phospho-L-seryl-[protein] + H2O = L-seryl-[protein] + phosphate. The catalysed reaction is O-phospho-L-threonyl-[protein] + H2O = L-threonyl-[protein] + phosphate. The polypeptide is Serine/threonine-protein phosphatase C23G10.1 (Caenorhabditis elegans).